A 190-amino-acid chain; its full sequence is dCTP deaminase, dUMP-forming (190 aa).

Residues 101-106, Asp119, 127-129, Gln148, Tyr162, and Gln174 each bind dCTP; these read KSSLGR and TLE. Glu129 (proton donor/acceptor) is an active-site residue. Residues 163–190 are disordered; the sequence is GSTRVGSKYQGQRGPTPSRSYQNFITST. The span at 171–190 shows a compositional bias: polar residues; it reads YQGQRGPTPSRSYQNFITST.

The protein belongs to the dCTP deaminase family. As to quaternary structure, homotrimer.

The catalysed reaction is dCTP + 2 H2O = dUMP + NH4(+) + diphosphate. The protein operates within pyrimidine metabolism; dUMP biosynthesis; dUMP from dCTP: step 1/1. In terms of biological role, bifunctional enzyme that catalyzes both the deamination of dCTP to dUTP and the hydrolysis of dUTP to dUMP without releasing the toxic dUTP intermediate. The chain is dCTP deaminase, dUMP-forming from Mycolicibacterium paratuberculosis (strain ATCC BAA-968 / K-10) (Mycobacterium paratuberculosis).